An 888-amino-acid polypeptide reads, in one-letter code: Alanine--tRNA ligase (888 aa).

Residues His-573, His-577, Cys-676, and His-680 each contribute to the Zn(2+) site.

It belongs to the class-II aminoacyl-tRNA synthetase family. Requires Zn(2+) as cofactor.

The protein resides in the cytoplasm. It catalyses the reaction tRNA(Ala) + L-alanine + ATP = L-alanyl-tRNA(Ala) + AMP + diphosphate. Its function is as follows. Catalyzes the attachment of alanine to tRNA(Ala) in a two-step reaction: alanine is first activated by ATP to form Ala-AMP and then transferred to the acceptor end of tRNA(Ala). Also edits incorrectly charged Ser-tRNA(Ala) and Gly-tRNA(Ala) via its editing domain. The sequence is that of Alanine--tRNA ligase from Corynebacterium glutamicum (strain ATCC 13032 / DSM 20300 / JCM 1318 / BCRC 11384 / CCUG 27702 / LMG 3730 / NBRC 12168 / NCIMB 10025 / NRRL B-2784 / 534).